Reading from the N-terminus, the 58-residue chain is Photosystem II reaction center protein K (58 aa).

Positions Met-1 to Ala-21 are excised as a propeptide. A helical membrane pass occupies residues Ile-29 to Phe-49.

The protein belongs to the PsbK family. In terms of assembly, PSII is composed of 1 copy each of membrane proteins PsbA, PsbB, PsbC, PsbD, PsbE, PsbF, PsbH, PsbI, PsbJ, PsbK, PsbL, PsbM, PsbT, PsbX, PsbY, PsbZ, Psb30/Ycf12, at least 3 peripheral proteins of the oxygen-evolving complex and a large number of cofactors. It forms dimeric complexes.

It localises to the plastid. Its subcellular location is the chloroplast thylakoid membrane. Its function is as follows. One of the components of the core complex of photosystem II (PSII). PSII is a light-driven water:plastoquinone oxidoreductase that uses light energy to abstract electrons from H(2)O, generating O(2) and a proton gradient subsequently used for ATP formation. It consists of a core antenna complex that captures photons, and an electron transfer chain that converts photonic excitation into a charge separation. The sequence is that of Photosystem II reaction center protein K from Adiantum capillus-veneris (Maidenhair fern).